A 491-amino-acid chain; its full sequence is Chromosomal replication initiator protein DnaA (491 aa).

The interval 1-69 is domain I, interacts with DnaA modulators; sequence MTTWNKCLKK…TIQEFHDGDL (69 aa). The interval 69–154 is domain II; it reads LLIEYSNKKF…KDDQEYSFGL (86 aa). The tract at residues 106–126 is disordered; that stretch reads DSEETSLNQEPKKSQKKLSSK. Positions 155–371 are domain III, AAA+ region; it reads PLKEKYVFDS…GALNRVLTTS (217 aa). Positions 199, 201, 202, and 203 each coordinate ATP. A domain IV, binds dsDNA region spans residues 372 to 491; the sequence is KFNHKDPTIE…YELLLDKISR (120 aa).

It belongs to the DnaA family. Oligomerizes as a right-handed, spiral filament on DNA at oriC.

The protein localises to the cytoplasm. Functionally, plays an essential role in the initiation and regulation of chromosomal replication. ATP-DnaA binds to the origin of replication (oriC) to initiate formation of the DNA replication initiation complex once per cell cycle. Binds the DnaA box (a 9 base pair repeat at the origin) and separates the double-stranded (ds)DNA. Forms a right-handed helical filament on oriC DNA; dsDNA binds to the exterior of the filament while single-stranded (ss)DNA is stabiized in the filament's interior. The ATP-DnaA-oriC complex binds and stabilizes one strand of the AT-rich DNA unwinding element (DUE), permitting loading of DNA polymerase. After initiation quickly degrades to an ADP-DnaA complex that is not apt for DNA replication. Binds acidic phospholipids. The polypeptide is Chromosomal replication initiator protein DnaA (Francisella philomiragia subsp. philomiragia (strain ATCC 25017 / CCUG 19701 / FSC 153 / O#319-036)).